A 306-amino-acid polypeptide reads, in one-letter code: UDP-N-acetylenolpyruvoylglucosamine reductase (306 aa).

Residues 34-198 enclose the FAD-binding PCMH-type domain; that stretch reads VGGPADLLIT…LEVTFKLHNS (165 aa). Arginine 177 is a catalytic residue. The Proton donor role is filled by serine 227. Glutamate 297 is an active-site residue.

Belongs to the MurB family. It depends on FAD as a cofactor.

The protein localises to the cytoplasm. The enzyme catalyses UDP-N-acetyl-alpha-D-muramate + NADP(+) = UDP-N-acetyl-3-O-(1-carboxyvinyl)-alpha-D-glucosamine + NADPH + H(+). It functions in the pathway cell wall biogenesis; peptidoglycan biosynthesis. Its function is as follows. Cell wall formation. This chain is UDP-N-acetylenolpyruvoylglucosamine reductase, found in Clostridium botulinum (strain 657 / Type Ba4).